A 642-amino-acid chain; its full sequence is Core protein VP4 (642 aa).

This sequence belongs to the orbivirus VP4 family.

The protein localises to the virion. Functionally, the VP4 protein is one of the five proteins (with VP1, VP3, VP6 and VP7) which form the inner capsid of the virus. This chain is Core protein VP4 (Segment-4), found in African horse sickness virus (AHSV).